We begin with the raw amino-acid sequence, 48 residues long: MTKRTLSNKTRSSILKVSGFRARMATAQGRKIIRTRRQKGRKKLAIPR.

The protein belongs to the bacterial ribosomal protein bL34 family.

The protein localises to the plastid. Its subcellular location is the chloroplast. The polypeptide is Large ribosomal subunit protein bL34c (Thalassiosira pseudonana (Marine diatom)).